A 173-amino-acid polypeptide reads, in one-letter code: Ribosome maturation factor RimM (173 aa).

The region spanning 95–169 is the PRC barrel domain; sequence EGSYYFKDIL…RIEVTLLEGL (75 aa).

The protein belongs to the RimM family. Binds ribosomal protein uS19.

The protein localises to the cytoplasm. Its function is as follows. An accessory protein needed during the final step in the assembly of 30S ribosomal subunit, possibly for assembly of the head region. Essential for efficient processing of 16S rRNA. May be needed both before and after RbfA during the maturation of 16S rRNA. It has affinity for free ribosomal 30S subunits but not for 70S ribosomes. This Lactobacillus johnsonii (strain CNCM I-12250 / La1 / NCC 533) protein is Ribosome maturation factor RimM.